A 220-amino-acid chain; its full sequence is Adenylate kinase (220 aa).

Residue 12–17 (GAGKGT) participates in ATP binding. The interval 32 to 62 (STGDIFRDIVKKENDELGKKIKEIMERGELV) is NMP. AMP contacts are provided by residues threonine 33, arginine 38, 60–62 (ELV), 88–91 (GYPR), and glutamine 95. The LID stretch occupies residues 129–166 (ARRICPKCGRIYNLISLPPKEDELCDDCKVKLVQREDD). Arginine 130 serves as a coordination point for ATP. Residues cysteine 133 and cysteine 136 each contribute to the Zn(2+) site. 139-140 (IY) contacts ATP. Zn(2+)-binding residues include cysteine 153 and cysteine 156. Residues arginine 163 and arginine 174 each contribute to the AMP site. Position 202 (isoleucine 202) interacts with ATP.

This sequence belongs to the adenylate kinase family. Monomer.

The protein resides in the cytoplasm. The enzyme catalyses AMP + ATP = 2 ADP. It participates in purine metabolism; AMP biosynthesis via salvage pathway; AMP from ADP: step 1/1. Catalyzes the reversible transfer of the terminal phosphate group between ATP and AMP. Plays an important role in cellular energy homeostasis and in adenine nucleotide metabolism. This Thermotoga maritima (strain ATCC 43589 / DSM 3109 / JCM 10099 / NBRC 100826 / MSB8) protein is Adenylate kinase.